The following is a 523-amino-acid chain: Probable glucose-1-phosphate adenylyltransferase large subunit, chloroplastic (523 aa).

It belongs to the bacterial/plant glucose-1-phosphate adenylyltransferase family. As to quaternary structure, heterotetramer.

The protein localises to the plastid. The protein resides in the chloroplast. The enzyme catalyses alpha-D-glucose 1-phosphate + ATP + H(+) = ADP-alpha-D-glucose + diphosphate. Its pathway is glycan biosynthesis; starch biosynthesis. With respect to regulation, activated by 3'phosphoglycerate, inhibited by orthophosphate. Allosteric regulation. In terms of biological role, this protein plays a role in synthesis of starch. It catalyzes the synthesis of the activated glycosyl donor, ADP-glucose from Glc-1-P and ATP. The protein is Probable glucose-1-phosphate adenylyltransferase large subunit, chloroplastic of Arabidopsis thaliana (Mouse-ear cress).